A 318-amino-acid polypeptide reads, in one-letter code: Ankyrin repeat and SOCS box protein 7 (318 aa).

ANK repeat units follow at residues 13-42, 46-75, 80-109, 116-145, 149-178, 180-208, and 213-242; these read QEELQIQAAVAAGDVHTVRKMLEQGYSPNG, NGWTLLHFSAARGKERCVRVFLEHGADPTV, GGFTALHYAAMHGRARIARLMLESEYRSDI, DGWTPLHVAAHYGRDSFVRLLLEFKAEVDP, KGTTPLQLAIIRERSSCVKILLDHNANIDI, NGFLLRYAVIKSNHSYCRMFLQRGADTDL, and DGQTPLHLSALRDDVLCARMLYNYGADTNT. The SOCS box domain maps to 265–318; that stretch reads LDFLQEVTRQPRNLQDLCRIKIRQCIGLQNLKLLDELPIAKVMKDYLKHKFDDI.

This sequence belongs to the ankyrin SOCS box (ASB) family. As to quaternary structure, interacts with CUL5. Interacts with RNF7. Interacts with PSRC1.

It participates in protein modification; protein ubiquitination. In terms of biological role, probable substrate-recognition component of a SCF-like ECS (Elongin-Cullin-SOCS-box protein) E3 ubiquitin-protein ligase complex which mediates the ubiquitination and subsequent proteasomal degradation of target proteins. Plays a role in spindle dynamics and genome integrity by targeting the mitotic progression protein PSRC1 for proteasomal degradation in a cell cycle-dependent manner. Also participates in meiosis by mediating the proper attachment between kinetochores and microtubules. The sequence is that of Ankyrin repeat and SOCS box protein 7 (ASB7) from Macaca fascicularis (Crab-eating macaque).